The primary structure comprises 238 residues: Probable RNA/DNA demethylase ALKBH6 (238 aa).

The Fe2OG dioxygenase domain occupies 96-227; sequence PANHVLVNQY…RVSLTIRRVP (132 aa). Residues Asn-103 and Tyr-105 each coordinate 2-oxoglutarate. Fe cation is bound by residues His-114, Asp-116, and His-182. Arg-218 and Ser-220 together coordinate 2-oxoglutarate.

It belongs to the alkB family. Interacts with VCPKMT. Fe(2+) is required as a cofactor.

It is found in the cytoplasm. The protein localises to the nucleus. Functionally, probable Fe(2+)/2-oxoglutarate-dependent dioxygenase involved in oxidative demethylation of nucleic acids. Binds nucleic acids with a preference for ssDNA or ssRNA to other types of DNAs. May play a role in nucleic acid damage repair. This is Probable RNA/DNA demethylase ALKBH6 (Alkbh6) from Mus musculus (Mouse).